The chain runs to 834 residues: Ras GTPase-activating protein 3 (834 aa).

2 consecutive C2 domains span residues 1–112 and 123–263; these read MAVE…DTWF and VQGK…EAWY. Ala2 is subject to N-acetylalanine. Phosphotyrosine is present on Tyr66. The residue at position 77 (Ser77) is a Phosphoserine. The residue at position 110 (Thr110) is a Phosphothreonine. The 216-residue stretch at 346–561 folds into the Ras-GAP domain; sequence GRVVPFISAI…DAVKNFLDLI (216 aa). Residues 576 to 677 form the PH domain; it reads ILLKEGFMIK…WIDILTKVSQ (102 aa). Residues 679-715 form a Btk-type zinc finger; the sequence is NQKRLTVFHPSAYLNGHWLCCRASSDTAIGCTPCTGG. The Zn(2+) site is built by His687, Cys698, Cys699, and Cys709. Ser809 and Ser833 each carry phosphoserine.

Inhibitory regulator of the Ras-cyclic AMP pathway. Binds inositol tetrakisphosphate (IP4). The protein is Ras GTPase-activating protein 3 (Rasa3) of Rattus norvegicus (Rat).